The following is a 467-amino-acid chain: Inactive pancreatic lipase-related protein 1 (467 aa).

The first 17 residues, 1 to 17 (MVSIWTIALFLLGAAKA), serve as a signal peptide directing secretion. Cystine bridges form between Cys-21/Cys-27 and Cys-109/Cys-120. The N-linked (GlcNAc...) asparagine glycan is linked to Asn-157. Catalysis depends on Ser-171, which acts as the Nucleophile. Residue Asp-194 is the Charge relay system of the active site. Ca(2+) is bound by residues Glu-205, Arg-208, Asp-210, and Asp-213. An intrachain disulfide couples Cys-255 to Cys-279. His-281 serves as the catalytic Charge relay system. 3 cysteine pairs are disulfide-bonded: Cys-303–Cys-314, Cys-317–Cys-322, and Cys-451–Cys-467. The PLAT domain occupies 356–467 (WRYGVSITLS…EDVLLTLTPC (112 aa)).

The protein belongs to the AB hydrolase superfamily. Lipase family. In terms of tissue distribution, detected in pancreas (at protein level).

The protein localises to the secreted. Its function is as follows. May function as inhibitor of dietary triglyceride digestion. Lacks detectable lipase activity towards triglycerides, diglycerides, phosphatidylcholine, galactolipids or cholesterol esters (in vitro). This is Inactive pancreatic lipase-related protein 1 (PNLIPRP1) from Canis lupus familiaris (Dog).